Reading from the N-terminus, the 103-residue chain is Large ribosomal subunit protein bL21 (103 aa).

This sequence belongs to the bacterial ribosomal protein bL21 family. Part of the 50S ribosomal subunit. Contacts protein L20.

Functionally, this protein binds to 23S rRNA in the presence of protein L20. The polypeptide is Large ribosomal subunit protein bL21 (Methylibium petroleiphilum (strain ATCC BAA-1232 / LMG 22953 / PM1)).